We begin with the raw amino-acid sequence, 370 residues long: DNA replication and repair protein RecF (370 aa).

Position 30-37 (30-37 (GENAQGKT)) interacts with ATP.

The protein belongs to the RecF family.

It is found in the cytoplasm. The RecF protein is involved in DNA metabolism; it is required for DNA replication and normal SOS inducibility. RecF binds preferentially to single-stranded, linear DNA. It also seems to bind ATP. This chain is DNA replication and repair protein RecF, found in Listeria innocua serovar 6a (strain ATCC BAA-680 / CLIP 11262).